The primary structure comprises 906 residues: Serine-aspartate repeat-containing protein C (906 aa).

Residues methionine 1–alanine 50 form the signal peptide. The interval alanine 51–threonine 127 is disordered. Residues alanine 51–lysine 486 are ligand binding A region. Composition is skewed to polar residues over residues glycine 56–asparagine 71 and arginine 80–proline 119. CNA-B domains are found at residues lysine 487–proline 597 and lysine 598–threonine 708. Positions lysine 669 to asparagine 881 are disordered. Composition is skewed to acidic residues over residues threonine 676–glutamate 686 and tyrosine 703–serine 845. Positions leucine 869 to glycine 873 match the LPXTG sorting signal motif. A Pentaglycyl murein peptidoglycan amidated threonine modification is found at threonine 872. Residues glycine 873–lysine 906 constitute a propeptide, removed by sortase.

It belongs to the serine-aspartate repeat-containing protein (SDr) family. In terms of assembly, homodimerizes; via N2-Domain. Interacts with host NRXN1; this interaction mediates bacterial attachment to host cells.

It is found in the secreted. Its subcellular location is the cell wall. Its function is as follows. Cell surface-associated calcium-binding protein which plays an important role in adhesion and pathogenesis. Mediates interactions with components of the extracellular matrix such as host NRXN1 to promote bacterial adhesion. The chain is Serine-aspartate repeat-containing protein C (sdrC) from Staphylococcus aureus (strain MRSA252).